We begin with the raw amino-acid sequence, 605 residues long: F-box/WD repeat-containing protein 1A (605 aa).

The segment at 128-177 (ASYEKEKELCVKYFEQWSESDQVEFVEHLISQMCHYQHGHINSYLKPMLQ) is homodimerization domain D. One can recognise an F-box domain in the interval 190–228 (DHIAENILSYLDAKSLCAAELVCKEWYRVTSDGMLWKKL). The tract at residues 190 to 228 (DHIAENILSYLDAKSLCAAELVCKEWYRVTSDGMLWKKL) is required for down-regulation of SNAI1. WD repeat units lie at residues 301–338 (ETSK…CKRI), 341–378 (GHTG…MLNT), 381–418 (HHCE…DITL), 424–461 (GHRA…FVRT), 464–503 (GHKR…RVLE), 505–541 (HEEL…DPRA), and 553–590 (EHSG…AAQA).

Homodimer. Self-associates. Component of the SCF(BTRC) complex formed of CUL1, SKP1, RBX1 and a BTRC dimer. Direct interaction with SKP1 occurs via the F-box domain. Interacts with phosphorylated ubiquitination substrates SMAD3 and SMAD4. Interacts with phosphorylated ubiquitination substrates CTNNB1, NFKBIA, NFKBIB, NFKBIE, NFKB1/nuclear factor NF-kappa-B p105 subunit, ATF4, CDC25A, DLG1, FBXO5 and SNAI1; the interaction requires the phosphorylation of the 2 serine residues in the substrate destruction motif D-S-G-X(2,3,4)-S. Binds UBQLN1. Interacts with CDC34 and UBE2R2. Interacts with FBXW11. Interacts with CUL4A and DDB1. Part of a SCF(BTRC)-like complex lacking CUL1, which is associated with phosphorylated NKBIA and RELA; RELA interacts directly with NFKBIA. Interacts with the phosphorylated form of GLI3. Interacts with CLU. Interacts with PER1 (phosphorylated), PER2 (phosphorylated) and PER3. Interacts with phosphorylated ubiquitination substrate CEP68. Interacts with ZC3H12A; this interaction occurs when ZC3H12A is phosphorylated in a IKBKB/IKKB-dependent manner. Interacts with HSF1; this interaction occurs during mitosis and induces HSF1 ubiquitin-dependent degradation, a process inhibited by CDC20. Interacts with NFE2L1. Interacts with INAVA. Interacts with IL10RA; this interaction leads to IL10RA ubiquitination and subsequent degradation. Interacts with REST. Interacts with KLF4; this interaction leads to KLF4 ubiquitination and subsequent degradation. Interacts with UBR2, as part of a SCF(BTRC) complex; the interaction mediates 'Lys-48'-linked ubiquitination of UBR2 and is regulated by DUSP22 in the T-cell receptor signaling pathway. As to quaternary structure, (Microbial infection) Interacts with vaccinia virus A49; this interaction inhibits NF-kappa-B activation. In terms of assembly, (Microbial infection) Interacts with HIV-1 Vpu. In terms of processing, ubiquitinated. Deubiquitinated by OTUD5, promoting its stability. In terms of tissue distribution, expressed in epididymis (at protein level).

It localises to the cytoplasm. The protein localises to the nucleus. Its pathway is protein modification; protein ubiquitination. Functionally, substrate recognition component of a SCF (SKP1-CUL1-F-box protein) E3 ubiquitin-protein ligase complex which mediates the ubiquitination and subsequent proteasomal degradation of target proteins. Recognizes and binds to phosphorylated target proteins. SCF(BTRC) mediates the ubiquitination of CTNNB1 and participates in Wnt signaling. SCF(BTRC) mediates the ubiquitination of phosphorylated NFKB1, ATF4, CDC25A, DLG1, FBXO5, PER1, SMAD3, SMAD4, SNAI1 and probably NFKB2. SCF(BTRC) mediates the ubiquitination of NFKBIA, NFKBIB and NFKBIE; the degradation frees the associated NFKB1 to translocate into the nucleus and to activate transcription. Ubiquitination of NFKBIA occurs at 'Lys-21' and 'Lys-22'. The SCF(FBXW11) complex also regulates NF-kappa-B by mediating ubiquitination of phosphorylated NFKB1: specifically ubiquitinates the p105 form of NFKB1, leading to its degradation. SCF(BTRC) mediates the ubiquitination of CEP68; this is required for centriole separation during mitosis. SCF(BTRC) mediates the ubiquitination and subsequent degradation of nuclear NFE2L1. Has an essential role in the control of the clock-dependent transcription via degradation of phosphorylated PER1 and PER2. May be involved in ubiquitination and subsequent proteasomal degradation through a DBB1-CUL4 E3 ubiquitin-protein ligase. Required for activation of NFKB-mediated transcription by IL1B, MAP3K14, MAP3K1, IKBKB and TNF. Required for proteolytic processing of GLI3. Mediates ubiquitination of REST, thereby leading to its proteasomal degradation. SCF(BTRC) mediates the ubiquitination and subsequent proteasomal degradation of KLF4; thereby negatively regulating cell pluripotency maintenance and embryogenesis. SCF(BTRC) acts as a regulator of mTORC1 signaling pathway by catalyzing ubiquitination and subsequent proteasomal degradation of phosphorylated DEPTOR, TFE3 and MITF. SCF(BTRC) directs 'Lys-48'-linked ubiquitination of UBR2 in the T-cell receptor signaling pathway. This chain is F-box/WD repeat-containing protein 1A (BTRC), found in Homo sapiens (Human).